The chain runs to 134 residues: 6,7-dimethyl-8-ribityllumazine synthase (134 aa).

5-amino-6-(D-ribitylamino)uracil-binding positions include Phe-12, 44 to 46, and 68 to 70; these read VFD and SVI. 73-74 contacts (2S)-2-hydroxy-3-oxobutyl phosphate; the sequence is DT. His-76 (proton donor) is an active-site residue. Leu-101 is a binding site for 5-amino-6-(D-ribitylamino)uracil. Arg-116 contributes to the (2S)-2-hydroxy-3-oxobutyl phosphate binding site.

The protein belongs to the DMRL synthase family.

It carries out the reaction (2S)-2-hydroxy-3-oxobutyl phosphate + 5-amino-6-(D-ribitylamino)uracil = 6,7-dimethyl-8-(1-D-ribityl)lumazine + phosphate + 2 H2O + H(+). The protein operates within cofactor biosynthesis; riboflavin biosynthesis; riboflavin from 2-hydroxy-3-oxobutyl phosphate and 5-amino-6-(D-ribitylamino)uracil: step 1/2. Catalyzes the formation of 6,7-dimethyl-8-ribityllumazine by condensation of 5-amino-6-(D-ribitylamino)uracil with 3,4-dihydroxy-2-butanone 4-phosphate. This is the penultimate step in the biosynthesis of riboflavin. The protein is 6,7-dimethyl-8-ribityllumazine synthase of Methanosarcina barkeri (strain Fusaro / DSM 804).